Here is a 238-residue protein sequence, read N- to C-terminus: MTHVEVVATIAPQLSIEETLIQKINHRIDAIDVLELRIDQIENVTVDQVAEMITKLKVMQDSFKLLVTYRTKLQGGYGQFINDLYLNLISDLANINGIDMIDIEWQADIDIEKHQRIITHLQQYNKEVVISHHNFESTPPLDELQFIFFKMQKFNPEYVKLAVMPHNKNDVLNLLQAMSTFSDTMDCKVVGISMSKLGLISRTAQGVFGGALTYGCIGEPQAPGQIDVTDLKAQVTLY.

Residues 35 to 37 (ELR) and Arg-70 contribute to the 3-dehydroquinate site. His-133 serves as the catalytic Proton donor/acceptor. Residue Lys-160 is the Schiff-base intermediate with substrate of the active site. The 3-dehydroquinate site is built by Arg-202 and Gln-225.

This sequence belongs to the type-I 3-dehydroquinase family. Homodimer.

The catalysed reaction is 3-dehydroquinate = 3-dehydroshikimate + H2O. It participates in metabolic intermediate biosynthesis; chorismate biosynthesis; chorismate from D-erythrose 4-phosphate and phosphoenolpyruvate: step 3/7. In terms of biological role, involved in the third step of the chorismate pathway, which leads to the biosynthesis of aromatic amino acids. Catalyzes the cis-dehydration of 3-dehydroquinate (DHQ) and introduces the first double bond of the aromatic ring to yield 3-dehydroshikimate. This Staphylococcus aureus (strain MSSA476) protein is 3-dehydroquinate dehydratase.